The primary structure comprises 169 residues: Procalin (169 aa).

An N-terminal signal peptide occupies residues M1 to A18. Intrachain disulfides connect C21/C125, C54/C168, and C83/C97.

Belongs to the calycin superfamily. Triabin family. In terms of tissue distribution, expressed in salivary glands.

It is found in the secreted. In Hospesneotomae protracta (Western bloodsucking conenose), this protein is Procalin.